Reading from the N-terminus, the 253-residue chain is Probable ATP-dependent transporter ycf16 (253 aa).

In terms of domain architecture, ABC transporter spans 6 to 250; the sequence is LEVTNLHAAV…EKYGYDWLKN (245 aa). 38–45 is an ATP binding site; that stretch reads GKNGSGKS.

The protein belongs to the ABC transporter superfamily. Ycf16 family.

The protein resides in the plastid. It localises to the chloroplast. The polypeptide is Probable ATP-dependent transporter ycf16 (ycf16) (Guillardia theta (Cryptophyte)).